A 223-amino-acid polypeptide reads, in one-letter code: Large ribosomal subunit protein uL6c (223 aa).

A chloroplast-targeting transit peptide spans 1–41 (MASSLVSSFQPRSAFLGDRNVFKVSSTPFAQVGYSSKTIEC).

Belongs to the universal ribosomal protein uL6 family. As to quaternary structure, part of the 50S ribosomal subunit.

It localises to the plastid. The protein resides in the chloroplast. Its function is as follows. This protein binds directly to 23S ribosomal RNA and is located at the aminoacyl-tRNA binding site of the peptidyltransferase center. This is Large ribosomal subunit protein uL6c (RPL6) from Arabidopsis thaliana (Mouse-ear cress).